Consider the following 298-residue polypeptide: Lipoyl synthase (298 aa).

Positions 40, 45, 51, 67, 71, 74, and 280 each coordinate [4Fe-4S] cluster. One can recognise a Radical SAM core domain in the interval 53–269 (AVRKTATFMI…KEIALSKGFS (217 aa)).

This sequence belongs to the radical SAM superfamily. Lipoyl synthase family. [4Fe-4S] cluster is required as a cofactor.

It localises to the cytoplasm. It carries out the reaction [[Fe-S] cluster scaffold protein carrying a second [4Fe-4S](2+) cluster] + N(6)-octanoyl-L-lysyl-[protein] + 2 oxidized [2Fe-2S]-[ferredoxin] + 2 S-adenosyl-L-methionine + 4 H(+) = [[Fe-S] cluster scaffold protein] + N(6)-[(R)-dihydrolipoyl]-L-lysyl-[protein] + 4 Fe(3+) + 2 hydrogen sulfide + 2 5'-deoxyadenosine + 2 L-methionine + 2 reduced [2Fe-2S]-[ferredoxin]. Its pathway is protein modification; protein lipoylation via endogenous pathway; protein N(6)-(lipoyl)lysine from octanoyl-[acyl-carrier-protein]. In terms of biological role, catalyzes the radical-mediated insertion of two sulfur atoms into the C-6 and C-8 positions of the octanoyl moiety bound to the lipoyl domains of lipoate-dependent enzymes, thereby converting the octanoylated domains into lipoylated derivatives. In Bacillus cereus (strain ATCC 10987 / NRS 248), this protein is Lipoyl synthase.